The following is a 259-amino-acid chain: MQIALLSEDPNRQSELEAIAARWGLKHDEDNVFALVLTEQQLELRKRDEPKLGAIFVDLVSGAVAHRRKFGGGKGQSIAKAVGLNKGATPIVLDGTAGLGRDAFVLASLGCKVQMVERHPVVAALLDDGLARAKQDAEIGVWVAERMSLLHASSHDALEQLMAQDDFVQPDVVYLDPMYPHPVNKKKSALVKKEMRVFQSLVGADNDADALLAPALLMATKRVVVKRPDYAEWLDNQKPSMAIETKKNRFDVYVNAAMA.

Residues 101 to 102 (RD), 117 to 118 (ER), 153 to 154 (SS), and aspartate 176 each bind S-adenosyl-L-methionine.

Belongs to the methyltransferase superfamily. RsmJ family.

The protein localises to the cytoplasm. It carries out the reaction guanosine(1516) in 16S rRNA + S-adenosyl-L-methionine = N(2)-methylguanosine(1516) in 16S rRNA + S-adenosyl-L-homocysteine + H(+). In terms of biological role, specifically methylates the guanosine in position 1516 of 16S rRNA. The polypeptide is Ribosomal RNA small subunit methyltransferase J (Aliivibrio fischeri (strain MJ11) (Vibrio fischeri)).